A 166-amino-acid polypeptide reads, in one-letter code: Putative lipoprotein Lxx21020 (166 aa).

The signal sequence occupies residues 1 to 22 (MTKTTRLLRATTVAAILLGLTG). A lipid anchor (N-palmitoyl cysteine) is attached at Cys-23. Residue Cys-23 is the site of S-diacylglycerol cysteine attachment.

It is found in the cell membrane. The chain is Putative lipoprotein Lxx21020 from Leifsonia xyli subsp. xyli (strain CTCB07).